Consider the following 274-residue polypeptide: 2,3,4,5-tetrahydropyridine-2,6-dicarboxylate N-succinyltransferase (274 aa).

Residues Arg-104 and Asp-141 each coordinate substrate.

Belongs to the transferase hexapeptide repeat family. Homotrimer.

It is found in the cytoplasm. The catalysed reaction is (S)-2,3,4,5-tetrahydrodipicolinate + succinyl-CoA + H2O = (S)-2-succinylamino-6-oxoheptanedioate + CoA. It functions in the pathway amino-acid biosynthesis; L-lysine biosynthesis via DAP pathway; LL-2,6-diaminopimelate from (S)-tetrahydrodipicolinate (succinylase route): step 1/3. In Shigella dysenteriae serotype 1 (strain Sd197), this protein is 2,3,4,5-tetrahydropyridine-2,6-dicarboxylate N-succinyltransferase.